Reading from the N-terminus, the 1043-residue chain is Chitin synthase 2 (1043 aa).

Over residues 1–10 the composition is skewed to polar residues; the sequence is MAQESSNMDQ. Disordered regions lie at residues 1–133 and 215–234; these read MAQE…PRRP and ESDFNVHYGPAPTGRQERRG. A compositionally biased stretch (basic and acidic residues) spans 11 to 21; the sequence is SKSDNVTDNKP. The span at 43 to 58 shows a compositional bias: low complexity; the sequence is SASTSSLPTSRPSSSP. 2 stretches are compositionally biased toward polar residues: residues 59 to 73 and 81 to 93; these read GQSPNITPSILTSDT and VSPTRPWTPSRGS. 6 helical membrane passes run 663 to 683, 703 to 723, 738 to 758, 780 to 800, 907 to 927, and 931 to 951; these read FVSLAFTFFSLANFYLTFYFI, IFAILRYTCVLLICLQFVLSM, MIIYCIIMMYTVFSALYMVVM, YIIVSTLSTVGLYFFMSFLYL, YMVSVWFIANAILAMAVSEAF, and SVGNNAYLAFVLWSVASLAVF.

The protein belongs to the chitin synthase family. Class II subfamily.

It localises to the cell membrane. The catalysed reaction is [(1-&gt;4)-N-acetyl-beta-D-glucosaminyl](n) + UDP-N-acetyl-alpha-D-glucosamine = [(1-&gt;4)-N-acetyl-beta-D-glucosaminyl](n+1) + UDP + H(+). Its function is as follows. Polymerizes chitin, a structural polymer of the cell wall and septum, by transferring the sugar moiety of UDP-GlcNAc to the non-reducing end of the growing chitin polymer. The sequence is that of Chitin synthase 2 (CHS2) from Paracoccidioides brasiliensis.